A 303-amino-acid polypeptide reads, in one-letter code: N-acetyl-D-glucosamine kinase (303 aa).

Residues 4-11 (GFDIGGTK) and 133-140 (GVGGGLIF) each bind ATP. His-157, Cys-177, Cys-179, and Cys-184 together coordinate Zn(2+).

It belongs to the ROK (NagC/XylR) family. NagK subfamily.

The enzyme catalyses N-acetyl-D-glucosamine + ATP = N-acetyl-D-glucosamine 6-phosphate + ADP + H(+). It participates in cell wall biogenesis; peptidoglycan recycling. Catalyzes the phosphorylation of N-acetyl-D-glucosamine (GlcNAc) derived from cell-wall degradation, yielding GlcNAc-6-P. The protein is N-acetyl-D-glucosamine kinase of Escherichia coli O139:H28 (strain E24377A / ETEC).